A 553-amino-acid chain; its full sequence is Hydroxylamine reductase (553 aa).

[2Fe-2S] cluster is bound by residues cysteine 3, cysteine 6, cysteine 18, and cysteine 25. Hybrid [4Fe-2O-2S] cluster is bound by residues histidine 249, glutamate 273, cysteine 317, cysteine 405, cysteine 433, cysteine 459, glutamate 493, and lysine 495. At cysteine 405 the chain carries Cysteine persulfide.

Belongs to the HCP family. [2Fe-2S] cluster is required as a cofactor. The cofactor is hybrid [4Fe-2O-2S] cluster.

Its subcellular location is the cytoplasm. The enzyme catalyses A + NH4(+) + H2O = hydroxylamine + AH2 + H(+). Catalyzes the reduction of hydroxylamine to form NH(3) and H(2)O. In Mannheimia succiniciproducens (strain KCTC 0769BP / MBEL55E), this protein is Hydroxylamine reductase.